The following is a 497-amino-acid chain: Alkene monooxygenase system, oxygenase component subunit alpha (497 aa).

Glutamate 104, glutamate 134, histidine 137, glutamate 197, glutamate 231, and histidine 234 together coordinate Fe cation.

The protein belongs to the TmoA/XamoA family. The alkene monooxygenase multicomponent enzyme system is composed of an electron transfer component and a monooxygenase component interacting with the effector protein XamoD. The electron transfer component is composed of a ferredoxin reductase (XamoF) and a ferredoxin (XamoC), and the monooxygenase component is formed by a heterohexamer (dimer of heterotrimers) of two alpha subunits (XamoA), two beta subunits (XamoE) and two gamma subunits (XamoB). It depends on Fe(2+) as a cofactor.

The protein localises to the cytoplasm. It carries out the reaction propene + NADH + O2 + H(+) = 1,2-epoxypropane + NAD(+) + H2O. With respect to regulation, inhibited by propyne. In terms of biological role, component of the alkene monooxygenase multicomponent enzyme system which catalyzes the O2- and NADH-dependent epoxidation of short chain (C2 to C6) alkenes to their corresponding epoxides. Also able to catalyze the oxidation of a number of chlorinated alkenes, including trichloroethylene, cis- and trans-1,2-dichloroethylene, vinyl chloride, 1-chloropropylene, 1,3-dichloropropylene and 2,3-dichloropropylene. The chain is Alkene monooxygenase system, oxygenase component subunit alpha from Xanthobacter autotrophicus (strain ATCC BAA-1158 / Py2).